A 483-amino-acid chain; its full sequence is Protein nucleotidyltransferase YdiU (483 aa).

Gly87, Gly89, Arg90, Lys110, Asp122, Gly123, Arg173, and Arg180 together coordinate ATP. Catalysis depends on Asp249, which acts as the Proton acceptor. Mg(2+) contacts are provided by Asn250 and Asp259. Residue Asp259 participates in ATP binding.

It belongs to the SELO family. The cofactor is Mg(2+). It depends on Mn(2+) as a cofactor.

It catalyses the reaction L-seryl-[protein] + ATP = 3-O-(5'-adenylyl)-L-seryl-[protein] + diphosphate. It carries out the reaction L-threonyl-[protein] + ATP = 3-O-(5'-adenylyl)-L-threonyl-[protein] + diphosphate. The catalysed reaction is L-tyrosyl-[protein] + ATP = O-(5'-adenylyl)-L-tyrosyl-[protein] + diphosphate. The enzyme catalyses L-histidyl-[protein] + UTP = N(tele)-(5'-uridylyl)-L-histidyl-[protein] + diphosphate. It catalyses the reaction L-seryl-[protein] + UTP = O-(5'-uridylyl)-L-seryl-[protein] + diphosphate. It carries out the reaction L-tyrosyl-[protein] + UTP = O-(5'-uridylyl)-L-tyrosyl-[protein] + diphosphate. In terms of biological role, nucleotidyltransferase involved in the post-translational modification of proteins. It can catalyze the addition of adenosine monophosphate (AMP) or uridine monophosphate (UMP) to a protein, resulting in modifications known as AMPylation and UMPylation. The sequence is that of Protein nucleotidyltransferase YdiU from Pelagibacter ubique (strain HTCC1062).